The primary structure comprises 304 residues: Serine/threonine-protein phosphatase PP1 isozyme 3 (304 aa).

Positions 61, 63, 89, and 121 each coordinate Mn(2+). The active-site Proton donor is His-122. Mn(2+) is bound by residues His-170 and His-245.

The protein belongs to the PPP phosphatase family. PP-1 subfamily. It depends on Mn(2+) as a cofactor.

The catalysed reaction is O-phospho-L-seryl-[protein] + H2O = L-seryl-[protein] + phosphate. It carries out the reaction O-phospho-L-threonyl-[protein] + H2O = L-threonyl-[protein] + phosphate. The sequence is that of Serine/threonine-protein phosphatase PP1 isozyme 3 (NPP3) from Nicotiana tabacum (Common tobacco).